Consider the following 418-residue polypeptide: Tyrosine--tRNA ligase (418 aa).

Position 38 (Tyr-38) interacts with L-tyrosine. The short motif at 43 to 52 (CTARSLHIGS) is the 'HIGH' region element. Residues Tyr-175 and Gln-179 each coordinate L-tyrosine. A 'KMSKS' region motif is present at residues 235–239 (KMGKT). Lys-238 lines the ATP pocket. The region spanning 348-413 (LSVVKLLQVS…CGKKRHLKVV (66 aa)) is the S4 RNA-binding domain.

It belongs to the class-I aminoacyl-tRNA synthetase family. TyrS type 1 subfamily. In terms of assembly, homodimer.

Its subcellular location is the cytoplasm. The catalysed reaction is tRNA(Tyr) + L-tyrosine + ATP = L-tyrosyl-tRNA(Tyr) + AMP + diphosphate + H(+). In terms of biological role, catalyzes the attachment of tyrosine to tRNA(Tyr) in a two-step reaction: tyrosine is first activated by ATP to form Tyr-AMP and then transferred to the acceptor end of tRNA(Tyr). The sequence is that of Tyrosine--tRNA ligase from Ehrlichia ruminantium (strain Welgevonden).